Reading from the N-terminus, the 312-residue chain is Malate dehydrogenase (312 aa).

NAD(+)-binding positions include 7–13 (GAAGGIG) and D34. Substrate is bound by residues R81 and R87. NAD(+)-binding positions include N94 and 117–119 (ITN). Residues N119 and R153 each contribute to the substrate site. H177 acts as the Proton acceptor in catalysis. M227 is an NAD(+) binding site.

The protein belongs to the LDH/MDH superfamily. MDH type 1 family. Homodimer.

It catalyses the reaction (S)-malate + NAD(+) = oxaloacetate + NADH + H(+). Catalyzes the reversible oxidation of malate to oxaloacetate. The chain is Malate dehydrogenase (mdh) from Moritella sp. (strain 2D2).